Reading from the N-terminus, the 330-residue chain is tRNA U34 carboxymethyltransferase (330 aa).

Residues K91, W105, K110, G130, 152–154 (DPS), 181–182 (IE), M196, Y200, and R315 contribute to the carboxy-S-adenosyl-L-methionine site.

Belongs to the class I-like SAM-binding methyltransferase superfamily. CmoB family. As to quaternary structure, homotetramer.

It catalyses the reaction carboxy-S-adenosyl-L-methionine + 5-hydroxyuridine(34) in tRNA = 5-carboxymethoxyuridine(34) in tRNA + S-adenosyl-L-homocysteine + H(+). Functionally, catalyzes carboxymethyl transfer from carboxy-S-adenosyl-L-methionine (Cx-SAM) to 5-hydroxyuridine (ho5U) to form 5-carboxymethoxyuridine (cmo5U) at position 34 in tRNAs. In Shewanella frigidimarina (strain NCIMB 400), this protein is tRNA U34 carboxymethyltransferase.